The primary structure comprises 664 residues: Bifunctional polymyxin resistance protein ArnA (664 aa).

Positions 1–308 (MSTKAVVFAY…EFGLVAGSQM (308 aa)) are formyltransferase ArnAFT. The active-site Proton donor; for formyltransferase activity is His106. Residues Arg116 and 138–142 (VKRAD) each bind (6R)-10-formyltetrahydrofolate. The tract at residues 318 to 664 (RRTRVLILGV…EAMAEKADQC (347 aa)) is dehydrogenase ArnADH. Residues Asp351 and 372–373 (DI) contribute to the NAD(+) site. UDP-alpha-D-glucuronate is bound by residues Ala397, Tyr402, and 436–437 (TS). Catalysis depends on Glu438, which acts as the Proton acceptor; for decarboxylase activity. UDP-alpha-D-glucuronate-binding positions include Arg464, Asn495, 529–538 (RLVDGGAQKR), and Tyr616. Arg622 serves as the catalytic Proton donor; for decarboxylase activity.

It in the N-terminal section; belongs to the Fmt family. UDP-L-Ara4N formyltransferase subfamily. In the C-terminal section; belongs to the NAD(P)-dependent epimerase/dehydratase family. UDP-glucuronic acid decarboxylase subfamily. As to quaternary structure, homohexamer, formed by a dimer of trimers.

The catalysed reaction is UDP-alpha-D-glucuronate + NAD(+) = UDP-beta-L-threo-pentopyranos-4-ulose + CO2 + NADH. It catalyses the reaction UDP-4-amino-4-deoxy-beta-L-arabinose + (6R)-10-formyltetrahydrofolate = UDP-4-deoxy-4-formamido-beta-L-arabinose + (6S)-5,6,7,8-tetrahydrofolate + H(+). It participates in nucleotide-sugar biosynthesis; UDP-4-deoxy-4-formamido-beta-L-arabinose biosynthesis; UDP-4-deoxy-4-formamido-beta-L-arabinose from UDP-alpha-D-glucuronate: step 1/3. It functions in the pathway nucleotide-sugar biosynthesis; UDP-4-deoxy-4-formamido-beta-L-arabinose biosynthesis; UDP-4-deoxy-4-formamido-beta-L-arabinose from UDP-alpha-D-glucuronate: step 3/3. Its pathway is bacterial outer membrane biogenesis; lipopolysaccharide biosynthesis. In terms of biological role, bifunctional enzyme that catalyzes the oxidative decarboxylation of UDP-glucuronic acid (UDP-GlcUA) to UDP-4-keto-arabinose (UDP-Ara4O) and the addition of a formyl group to UDP-4-amino-4-deoxy-L-arabinose (UDP-L-Ara4N) to form UDP-L-4-formamido-arabinose (UDP-L-Ara4FN). The modified arabinose is attached to lipid A and is required for resistance to polymyxin and cationic antimicrobial peptides. This Pseudomonas syringae pv. syringae (strain B728a) protein is Bifunctional polymyxin resistance protein ArnA.